A 991-amino-acid chain; its full sequence is Glutamate receptor 1 (991 aa).

Residues 1-27 form the signal peptide; sequence MHSRLKFLAYLHFICASSIFWPEFSSA. Over 28–611 the chain is Extracellular; the sequence is QQQQQTVSLT…VFSFLNPLSQ (584 aa). 4 N-linked (GlcNAc...) asparagine glycosylation sites follow: N67, N195, N208, and N281. 2 disordered regions span residues 300-321 and 354-379; these read DSRK…GPNS and FRSN…NESS. A compositionally biased stretch (polar residues) spans 308-318; that stretch reads SGQSQSQNAGG. Positions 365 to 379 are enriched in low complexity; that stretch reads GGSSSSSATGTNESS. 5 N-linked (GlcNAc...) asparagine glycosylation sites follow: N376, N385, N426, N437, and N477. A helical transmembrane segment spans residues 612–632; the sequence is EIWISVILSYVGVSFVLYFVT. At 633 to 710 the chain is on the cytoplasmic side; the sequence is RFPPYEWRIV…PSIAGRIAAA (78 aa). A helical transmembrane segment spans residues 711–731; that stretch reads VWWFFTIILISSYTANLAAFL. Over 732–895 the chain is Extracellular; it reads TVERMVAPIK…STPNELSLSN (164 aa). A helical membrane pass occupies residues 896–916; the sequence is VAGIYYILIGGLLLAVIVAIM. At 917-991 the chain is on the cytoplasmic side; that stretch reads EFFCRNKTPQ…ASNVRYQYSM (75 aa).

The protein belongs to the glutamate-gated ion channel (TC 1.A.10.1) family. In terms of assembly, homooligomer. Central nervous system.

It is found in the cell membrane. Its subcellular location is the postsynaptic cell membrane. In terms of biological role, receptor for glutamate. L-glutamate acts as an excitatory neurotransmitter at many synapses in the central nervous system. The postsynaptic actions of Glu are mediated by a variety of receptors that are named according to their selective agonists. Forms ligand-gated ion channels which are activated by kainate. The protein is Glutamate receptor 1 (GluRIA) of Drosophila melanogaster (Fruit fly).